A 319-amino-acid chain; its full sequence is MTPLLRTICAILCILIAVPLTFACPTKAGVSKQANKRPTYAIAHMVLDRKGLKDAIKNGANSVEIDIAAYKEGWWADHDIRGRSWGDSLEDMFKAVAKESKNIAFVWLDLKTPDMCSGATCNKDVLDPSKCKPKDKCSMNSLQELAQKILNPAGVRILYGFFGAGATDSAGFNYIQGNLKAGEAVCLSGEVENVLNVYKKKGRGVKPQQRVMDYGYTQLETGFGNCKEKGYNTCAGLRNGAKARDKGDVKRVFGWTSRVGDGERVGQLLDKAHVDGIIYGFAITRYYDHEDSRAAARDITQRVQKSDDRYMATGADKPW.

The N-terminal stretch at 1–23 (MTPLLRTICAILCILIAVPLTFA) is a signal peptide. The active site involves H44. The Mg(2+) site is built by E64, D66, and D109. The SMD-tail signature appears at 312 to 319 (ATGADKPW).

It belongs to the sphingomyelinase D/phospholipase D family. The cofactor is Mg(2+).

It is found in the secreted. The catalysed reaction is a sphingomyelin + H2O = an N-acylsphing-4-enine 1-phosphate + choline + H(+). Functionally, catalyzes the hydrolysis of sphingomyelin. Sphingomyelinases D are produced by some spider in their venoms, but also by arthropods such as ticks, or pathogenic bacteria and fungi. They might play a role in pathogenicity through different mechanisms, such as membrane destabilization and host cell penetration, but also pulmonary inflammation and cutaneous lesions. The chain is Sphingomyelinase D from Ajellomyces capsulatus (strain G186AR / H82 / ATCC MYA-2454 / RMSCC 2432) (Darling's disease fungus).